The primary structure comprises 279 residues: Ankyrin repeat domain-containing protein 7 (279 aa).

Residues 1 to 11 (MKKFFPFRGKR) are compositionally biased toward basic residues. Residues 1–25 (MKKFFPFRGKRKTDDSHSHSSEVPI) are disordered. ANK repeat units follow at residues 80–109 (RSRT…KINV), 113–142 (ENRT…DPNL), 146–175 (YSNT…NLEA), 179–208 (DGHT…DVNA), and 212–241 (NHRT…DLAH).

In Mus musculus (Mouse), this protein is Ankyrin repeat domain-containing protein 7 (Ankrd7).